Reading from the N-terminus, the 398-residue chain is DNA replication and repair protein RecF (398 aa).

30-37 (GRNGFGKT) contacts ATP.

This sequence belongs to the RecF family.

The protein localises to the cytoplasm. Functionally, the RecF protein is involved in DNA metabolism; it is required for DNA replication and normal SOS inducibility. RecF binds preferentially to single-stranded, linear DNA. It also seems to bind ATP. This Corynebacterium efficiens (strain DSM 44549 / YS-314 / AJ 12310 / JCM 11189 / NBRC 100395) protein is DNA replication and repair protein RecF.